Here is a 232-residue protein sequence, read N- to C-terminus: MKIGIIGAMEEEVTLLRDKIDNRQTITLGGCEIYTGQLNGTEVALLKSGIGKVAAALGATLLLEHCKPDVIINTGSAGGLASTLKVGDIVVSDETRYHDADVTAFGYEYGQLPGCPAGFKADDKLIAAAESCIRELNLNAVRGLIVSGDAFINGSVGLAKIRHNFPDAVAVEMEATAIAHVCHNFNVPFVVVRAISDVADQQSHLSFDEFLAVAAKQSTLMVETLVQKLAHG.

The active-site Proton acceptor is the Glu-12. Residues Gly-78, Ile-152, and Met-173–Glu-174 each bind substrate. Asp-197 functions as the Proton donor in the catalytic mechanism.

This sequence belongs to the PNP/UDP phosphorylase family. MtnN subfamily. In terms of assembly, homodimer.

The catalysed reaction is S-adenosyl-L-homocysteine + H2O = S-(5-deoxy-D-ribos-5-yl)-L-homocysteine + adenine. The enzyme catalyses S-methyl-5'-thioadenosine + H2O = 5-(methylsulfanyl)-D-ribose + adenine. It catalyses the reaction 5'-deoxyadenosine + H2O = 5-deoxy-D-ribose + adenine. It participates in amino-acid biosynthesis; L-methionine biosynthesis via salvage pathway; S-methyl-5-thio-alpha-D-ribose 1-phosphate from S-methyl-5'-thioadenosine (hydrolase route): step 1/2. Catalyzes the irreversible cleavage of the glycosidic bond in both 5'-methylthioadenosine (MTA) and S-adenosylhomocysteine (SAH/AdoHcy) to adenine and the corresponding thioribose, 5'-methylthioribose and S-ribosylhomocysteine, respectively. Also cleaves 5'-deoxyadenosine, a toxic by-product of radical S-adenosylmethionine (SAM) enzymes, into 5-deoxyribose and adenine. Thus, is required for in vivo function of the radical SAM enzymes biotin synthase and lipoic acid synthase, that are inhibited by 5'-deoxyadenosine accumulation. The polypeptide is 5'-methylthioadenosine/S-adenosylhomocysteine nucleosidase (Salmonella choleraesuis (strain SC-B67)).